A 349-amino-acid chain; its full sequence is Cytoplasmic tRNA 2-thiolation protein 2 (349 aa).

Belongs to the CTU2/NCS2 family.

The protein localises to the cytoplasm. It functions in the pathway tRNA modification; 5-methoxycarbonylmethyl-2-thiouridine-tRNA biosynthesis. In terms of biological role, plays a central role in 2-thiolation of mcm(5)S(2)U at tRNA wobble positions of tRNA(Lys), tRNA(Glu) and tRNA(Gln). May act by forming a heterodimer with tut-1/ctu-1 that ligates sulfur from thiocarboxylated urm-1 onto the uridine of tRNAs at wobble position. In Caenorhabditis briggsae, this protein is Cytoplasmic tRNA 2-thiolation protein 2.